We begin with the raw amino-acid sequence, 159 residues long: 6,7-dimethyl-8-ribityllumazine synthase (159 aa).

Residues W26, 57 to 59, and 79 to 81 contribute to the 5-amino-6-(D-ribitylamino)uracil site; these read ALE and CVI. Residue 84 to 85 coordinates (2S)-2-hydroxy-3-oxobutyl phosphate; it reads GT. Residue H87 is the Proton donor of the active site. A 5-amino-6-(D-ribitylamino)uracil-binding site is contributed by N112. Residue R126 coordinates (2S)-2-hydroxy-3-oxobutyl phosphate.

This sequence belongs to the DMRL synthase family.

The catalysed reaction is (2S)-2-hydroxy-3-oxobutyl phosphate + 5-amino-6-(D-ribitylamino)uracil = 6,7-dimethyl-8-(1-D-ribityl)lumazine + phosphate + 2 H2O + H(+). It participates in cofactor biosynthesis; riboflavin biosynthesis; riboflavin from 2-hydroxy-3-oxobutyl phosphate and 5-amino-6-(D-ribitylamino)uracil: step 1/2. Catalyzes the formation of 6,7-dimethyl-8-ribityllumazine by condensation of 5-amino-6-(D-ribitylamino)uracil with 3,4-dihydroxy-2-butanone 4-phosphate. This is the penultimate step in the biosynthesis of riboflavin. This Corynebacterium efficiens (strain DSM 44549 / YS-314 / AJ 12310 / JCM 11189 / NBRC 100395) protein is 6,7-dimethyl-8-ribityllumazine synthase.